The following is a 163-amino-acid chain: Transcription elongation factor GreA (163 aa).

Residues 45–65 (NAEYHAAREKQAFIEARINEL) adopt a coiled-coil conformation.

Belongs to the GreA/GreB family.

Its function is as follows. Necessary for efficient RNA polymerase transcription elongation past template-encoded arresting sites. The arresting sites in DNA have the property of trapping a certain fraction of elongating RNA polymerases that pass through, resulting in locked ternary complexes. Cleavage of the nascent transcript by cleavage factors such as GreA or GreB allows the resumption of elongation from the new 3'terminus. GreA releases sequences of 2 to 3 nucleotides. This Helicobacter hepaticus (strain ATCC 51449 / 3B1) protein is Transcription elongation factor GreA.